The chain runs to 82 residues: MEKLIILLLVASLLVTTDSVVKGKKAARGWLFNEVETCELGGLGDPCSGSGDCCCDQCLCSGSYEHCTQNPDRWFCCRTYGN.

Residues 1–19 form the signal peptide; it reads MEKLIILLLVASLLVTTDS.

May contain 5 disulfide bonds. As to expression, expressed by the venom duct.

It is found in the secreted. In terms of biological role, probable neurotoxin. This is Conotoxin Cal30 from Californiconus californicus (California cone).